Consider the following 198-residue polypeptide: Probable opine utilization operon repressor (198 aa).

The protein operates within opine metabolism; mannopine biosynthesis [regulation]. Functionally, possible repressor for genes for mannityl-opine utilization and / or plasmid conjugative transfer. The sequence is that of Probable opine utilization operon repressor (opnR) from Rhizobium rhizogenes (Agrobacterium rhizogenes).